The chain runs to 129 residues: Small ribosomal subunit protein uS11 (129 aa).

Belongs to the universal ribosomal protein uS11 family. As to quaternary structure, part of the 30S ribosomal subunit. Interacts with proteins S7 and S18. Binds to IF-3.

Functionally, located on the platform of the 30S subunit, it bridges several disparate RNA helices of the 16S rRNA. Forms part of the Shine-Dalgarno cleft in the 70S ribosome. The chain is Small ribosomal subunit protein uS11 from Methylobacillus flagellatus (strain ATCC 51484 / DSM 6875 / VKM B-1610 / KT).